We begin with the raw amino-acid sequence, 406 residues long: Elongation factor Tu (406 aa).

The tr-type G domain maps to 10 to 215 (KPHVNVGTIG…AIDEYIPTPV (206 aa)). The segment at 19–26 (GHVDHGKT) is G1. 19 to 26 (GHVDHGKT) contacts GTP. Position 26 (T26) interacts with Mg(2+). A G2 region spans residues 61–65 (GITIN). The segment at 82–85 (DCPG) is G3. Residues 82 to 86 (DCPGH) and 137 to 140 (NKVD) contribute to the GTP site. Residues 137–140 (NKVD) form a G4 region. A G5 region spans residues 175–177 (SAL).

The protein belongs to the TRAFAC class translation factor GTPase superfamily. Classic translation factor GTPase family. EF-Tu/EF-1A subfamily. Monomer.

It localises to the cytoplasm. It catalyses the reaction GTP + H2O = GDP + phosphate + H(+). GTP hydrolase that promotes the GTP-dependent binding of aminoacyl-tRNA to the A-site of ribosomes during protein biosynthesis. This chain is Elongation factor Tu, found in Thermus aquaticus.